The chain runs to 594 residues: Segmentation polarity homeobox protein engrailed (594 aa).

7 disordered regions span residues 1 to 64 (MALE…TRDE), 76 to 127 (IKQE…PASI), 141 to 164 (KATA…ISPG), 198 to 217 (HYYQ…PQRA), 231 to 299 (ISKS…PTGS), 387 to 458 (AGTG…GSEN), and 474 to 501 (DRPS…RPRT). Positions 22 to 60 (SQSPTSTTTVTMATASPVPACTTTTTTTSTSGASAASSP) are enriched in low complexity. Positions 92–112 (PHHHQHPHHHQLPHHPHHQHH) are enriched in basic residues. The segment covering 151–164 (HPQPPAIREPISPG) has biased composition (pro residues). Over residues 237 to 247 (LCSSNGSSSAT) the composition is skewed to polar residues. Composition is skewed to low complexity over residues 278-299 (ASPS…PTGS) and 387-402 (AGTG…ANGA). Composition is skewed to polar residues over residues 426-436 (SSETNGSSSQD) and 448-458 (ETSSTKDGSEN). The span at 487-499 (QPKEKGDSEEKRP) shows a compositional bias: basic and acidic residues. Residues 496–555 (EKRPRTAFSNAQLQRLKNEFNENRYLTEKRRQTLSAELGLNEAQIKIWFQNKRAKIKKSS) constitute a DNA-binding region (homeobox).

The protein belongs to the engrailed homeobox family.

Its subcellular location is the nucleus. Functionally, this protein specifies the body segmentation pattern. It is required for the development of the central nervous system. Transcriptional regulator that repress activated promoters. The polypeptide is Segmentation polarity homeobox protein engrailed (en) (Anopheles gambiae (African malaria mosquito)).